Reading from the N-terminus, the 102-residue chain is Nuclear protein 2 (102 aa).

Disordered regions lie at residues 1 to 26 (MDPP…ALPT) and 46 to 102 (PASG…TRLA). A compositionally biased stretch (basic residues) spans 85 to 102 (QRKRRQRQLQPRPRTRLA).

Belongs to the NUPR family.

Its subcellular location is the nucleus. Functionally, acts as a transcriptional repressor by inhibiting gene expression at the NUPR1 promoter in a p53/TP53-dependent manner in cancer cells. Involved in the G1 cell cycle arrest, and in a decrease in cell viability and cell proliferation of pancreatic cancer cells. Plays a role as a negative regulator of the protumoral factor NUPR1. The chain is Nuclear protein 2 from Mus musculus (Mouse).